Reading from the N-terminus, the 1744-residue chain is Tanabin (1744 aa).

The head stretch occupies residues 1 to 12 (MEGYLASVSLGE). The interval 8 to 48 (VSLGEESTQMWSLNKRLEAYLSRVKALEEENELLRKEIHSL) is coil 1A. The 308-residue stretch at 13-320 (ESTQMWSLNK…SLLEAESTRI (308 aa)) folds into the IF rod domain. A linker 1 region spans residues 49–60 (RSSKSERCWKKK). The tract at residues 61–156 (HHEEMMKLRD…RDHEEEKALM (96 aa)) is coil 1B. The interval 157 to 179 (EEEIASFSQRLENFRVAPVAFKP) is linker 12. Residues 180 to 193 (VEVDDYARKLSEIW) are coil 2A. A linker 2 region spans residues 194–199 (QGAVEE). The tract at residues 200–314 (YKSEVSVLEA…EVATYRSLLE (115 aa)) is coil 2B. Positions 315-1744 (AESTRIYTDY…KKALRWKRMF (1430 aa)) are tail. Basic and acidic residues-rich tracts occupy residues 341 to 371 (RRRQ…KNEL) and 785 to 815 (HSHH…DKSS). Disordered stretches follow at residues 341–372 (RRRQ…NELQ), 785–816 (HSHH…KSSE), 976–996 (EENQ…DIEE), 1032–1093 (SMED…QQED), 1340–1470 (DSDL…FGDV), 1485–1506 (SGLA…SMEN), and 1560–1722 (AREK…LNGH). Residues 980–990 (LSENEGNQNFG) show a composition bias toward polar residues. Residues 1034 to 1056 (EDEEEQNNPETEDNIGLEQESDQ) are compositionally biased toward acidic residues. Residues 1074–1086 (VVFKPEDMSDKSE) are compositionally biased toward basic and acidic residues. The segment covering 1340 to 1351 (DSDLESTEEQVQ) has biased composition (acidic residues). Residues 1352-1367 (ETERIPFKPEDSKMEN) show a composition bias toward basic and acidic residues. The span at 1368–1377 (ENSESEESVD) shows a compositional bias: acidic residues. Residues 1386–1398 (HKSEEFEISKDYQ) show a composition bias toward basic and acidic residues. Residues 1412-1421 (LEDEFEDLTE) are compositionally biased toward acidic residues. The span at 1423 to 1432 (PDVHEEHQNN) shows a compositional bias: basic and acidic residues. A compositionally biased stretch (polar residues) spans 1433–1442 (DDSGASTFIT). Residues 1445 to 1460 (DEDKEREVRESVSKDE) show a composition bias toward basic and acidic residues. A compositionally biased stretch (acidic residues) spans 1496–1505 (DNEESEDSME). 3 stretches are compositionally biased toward polar residues: residues 1576 to 1586 (EFTNENQSASP), 1597 to 1621 (EDSV…TSIS), and 1629 to 1639 (SNISTTEQSST). A compositionally biased stretch (acidic residues) spans 1680–1691 (RSEDEELDDEGS). Positions 1698–1709 (NDEKANGEHKDV) are enriched in basic and acidic residues.

Belongs to the intermediate filament family. Growth cones of embryonic vertebrate neurons.

The protein is Tanabin of Xenopus laevis (African clawed frog).